The primary structure comprises 677 residues: MHLLLWLLLLARLCRPEFICEVSKVTSQVEVNCDNKGLKALPPGLPGDTAILHLAENPLGAFSTALLGPLTRLAQLHLRQSQLTQLQVDGMLPRLETLDVSHNRLKSLPSLGRALPALTTLDASFNELVALSPGTLDGLSHLHELYLRGNKLKTLPPRLLAPTAQLRKLNLADNRLTELPPGFLEGLGELDTLYLQGNWLRTVPKGFFGDLLLPFTFLHGNPWSCDCEILYLARWLRDNSNNVYLWKEGVEAKATTPNVDSVRCVNWKNVPVHTYQGKDCPSPMDGGDMDYDNYDDEDEKLPGVEAPATRAVVSFSTHTKAHTTHWGLLYPTFAYPDHQMAYLSSTLELTEKQTMFPSTLGPIMPTTTPEPTTPPTTLEPTTTPTTPEPTTPPTTLEPTTTPITPEPTMPPTTLEPTTTPITPEPTTPSTTPTTPQPATTPTTPQPATTPTTPQPATTPTTPQPTTTPTIPELPTPPTTPEPTMPPTTLEPTTTPTSPTTTLILSESNTFLGIPELTSPCTTSEYPIVPSLVHLPEAHEVARGTSDSSRNHRLFNPDLCCLLPLGFYILGLLWLLFASVVLILLLTWAQHVKPQALAMATYTTHLELQWGKQVTVPWAWLLFLQGSFPTFRSSLFLWVRANSYVGPLMAGRRPSALSLGRGQDLLGTVGVRYSSHSL.

An N-terminal signal peptide occupies residues 1–16 (MHLLLWLLLLARLCRP). The LRRNT domain occupies 17–47 (EFICEVSKVTSQVEVNCDNKGLKALPPGLPG). Over 17-564 (EFICEVSKVT…NPDLCCLLPL (548 aa)) the chain is Extracellular. Residues cysteine 20 and cysteine 33 are joined by a disulfide bond. 6 LRR repeats span residues 72 to 93 (RLAQ…GMLP), 94 to 115 (RLET…GRAL), 117 to 138 (ALTT…TLDG), 141 to 162 (HLHE…LLAP), 165 to 186 (QLRK…FLEG), and 189 to 210 (ELDT…FFGD). Residues 221–282 (NPWSCDCEIL…HTYQGKDCPS (62 aa)) form the LRRCT domain. Intrachain disulfides connect cysteine 225–cysteine 264 and cysteine 227–cysteine 280. 2 positions are modified to sulfotyrosine: tyrosine 291 and tyrosine 294. 11 O-linked (GalNAc...) threonine glycosylation sites follow: threonine 309, threonine 319, threonine 323, threonine 324, threonine 346, threonine 354, threonine 368, threonine 372, threonine 376, threonine 377, and threonine 399. The disordered stretch occupies residues 359-499 (TLGPIMPTTT…EPTTTPTSPT (141 aa)). 4 stretches are compositionally biased toward low complexity: residues 362 to 385 (PIMP…TTPT), 393 to 403 (PTTLEPTTTPI), 411 to 421 (PTTLEPTTTPI), and 427 to 470 (TPST…TPTI). A compositionally biased stretch (pro residues) spans 471–485 (PELPTPPTTPEPTMP). Over residues 486-499 (PTTLEPTTTPTSPT) the composition is skewed to low complexity. A glycan (O-linked (GalNAc...) threonine) is linked at threonine 487. An O-linked (GalNAc...) serine glycan is attached at serine 497. O-linked (GalNAc...) threonine glycosylation is present at threonine 500. Serine 523 is a glycosylation site (O-linked (GalNAc...) serine). The chain crosses the membrane as a helical span at residues 565-585 (GFYILGLLWLLFASVVLILLL). The Cytoplasmic segment spans residues 586–677 (TWAQHVKPQA…VGVRYSSHSL (92 aa)). Phosphoserine is present on residues serine 654 and serine 657.

In terms of assembly, two GP-Ib beta are disulfide-linked to one GP-Ib alpha. GP-IX is complexed with the GP-Ib heterodimer via a non covalent linkage. Interacts with FLNB. Interacts with FLNA (via filamin repeats 4, 9, 12, 17, 19, 21, and 23). In terms of processing, O-glycosylated. Post-translationally, glycocalicin is the product of a proteolytic cleavage/shedding, catalyzed by ADAM17, which releases most of the extracellular domain. Binding sites for vWF and thrombin are in this part of the protein.

The protein resides in the membrane. GP-Ib, a surface membrane protein of platelets, participates in the formation of platelet plugs by binding to the A1 domain of vWF, which is already bound to the subendothelium. In Canis lupus familiaris (Dog), this protein is Platelet glycoprotein Ib alpha chain (GP1BA).